The following is a 492-amino-acid chain: uncharacterized protein (492 aa).

The next 13 helical transmembrane spans lie at V67–L87, A88–G108, I110–V130, G157–G177, Y185–L205, I232–I252, F255–F275, L294–V314, W333–W353, F367–Q387, L392–L412, S434–F454, and G464–I484.

Belongs to the major facilitator superfamily. Proton-dependent oligopeptide transporter (POT/PTR) (TC 2.A.17) family.

Its subcellular location is the cell membrane. This is an uncharacterized protein from Bacillus subtilis (strain 168).